The sequence spans 1690 residues: MSDDTSASGGTSAPFPSPVTADPEPGATASKLPGPIRSNIPTPATSGTGIPQPSKMKAPSSFGSTGSVSKIGRPCCNHTTPKSGPPPREATSMSRESDDNLSSINSAYTDNSSAVLTANTEQFIIGQRVWLGGTRPGQIAFIGDTHFAAGEWAGVVLDEPNGKNDGCVSGKRYFQCEPKRGIFSRLTRLTTYPLAGAQTPTSPLAKSSPDRSRTVSPTASIRSSMLRSPGIGGKNGMAVGDRVIVSSGFGSRPGILRYLGETQFAPGNWCGVELDEPSGKNDGTVDDIRYFECKPKYGVFVPIAKVSLSPSSKKTRLSRTGSRESLTSIGTMNSIATTATSRMRMNAQQRKSSTPVKPILATPKSQFSMQDLLREKQQHVEKLMVERDLDREDAQNQALQLQKNINELKARIVELESALDNERKKTEELQCSIDEAQFCGDELNAQSQVYKEKIHDLESKITKLVSATPSLQSILPPDLPSDDGALQEEIAKLQEKMTIQQKEVESRIAEQLEEEQRLRENVKYLNEQIATLQSELVSKDEALEKFSLSECGIENLRRELELLKEENEKQAQEAQAEFTRKLAEKSVEVLRLSSELQNLKATSDSLESERVNKTDECEILQTEVRMRDEQIRELNQQLDEVTTQLNVQKADSSALDDMLRLQKEGTEEKSTLLEKTEKELVQSKEQAAKTLNDKEQLEKQISDLKQLAEQEKLVREMTENAINQIQLEKESIEQQLALKQNELEDFQKKQSESEVHLQEIKAQNTQKDFELVESGESLKKLQQQLEQKTLGHEKLQAALEELKKEKETIIKEKEQELQQLQSKSAESESALKVVQVQLEQLQQQAAASGEEGSKTVAKLHDEISQLKSQAEETQSELKSTQSNLEAKSKQLEAANGSLEEEAKKSGHLLEQITKLKSEVGETQAALSSCHTDVESKTKQLEAANAALEKVNKEYAESRAEASDLQDKVKEITDTLHAELQAERSSSSALHTKLSKFSDEIATGHKELTSKADAWSQEMLQKEKELQELRQQLQDSQDSQTKLKAEGERKEKSFEESIKNLQEEVTKAKTENLELSTGTQTTIKDLQERLEITNAELQHKEKMASEDAQKIADLKTLVEAIQVANANISATNAELSTVLEVLQAEKSETNHIFELFEMEADMNSERLIEKVTGIKEELKETHLQLDERQKKFEELEEKLKQAQQSEQKLQQESQTSKEKLTEIQQSLQELQDSVKQKEELVQNLEEKVRESSSIIEAQNTKLNESNVQLENKTSCLKETQDQLLESQKKEKQLQEEAAKLSGELQQVQEANGDIKDSLVKVEELVKVLEEKLQAATSQLDAQQATNKELQELLVKSQENEGNLQGESLAVTEKLQQLEQANGELKEALCQKENGLKELQGKLDESNTVLESQKKSHNEIQDKLEQAQQKERTLQEETSKLAEQLSQLKQANEELQKSLQQKQLLLEKGNEFDTQLAEYQKVIDEMDDAASVKSALLEQLQNRVAELETALRQANDAQKTAYLETKELRRQLESLELEKSREVLSLKAQMNGASSRSGKGDEVESLDIETSLAKINFLNSIIADMQQKNDALKAKVQTLETLPMDFTKPHAFDALTKRKPAPRLFCDICDEFDQHDTEDCPIQGSEDQDYSTPSSESNNNEKERKLPAPRKYCDSCEVFGHDTSECADDETY.

Composition is skewed to polar residues over residues 1–11 and 39–51; these read MSDDTSASGGT and NIPT…TGIP. Positions 1-105 are disordered; sequence MSDDTSASGG…ESDDNLSSIN (105 aa). Serine 64 and serine 67 each carry phosphoserine. Residues 143-185 form the CAP-Gly 1 domain; that stretch reads GDTHFAAGEWAGVVLDEPNGKNDGCVSGKRYFQCEPKRGIFSR. Residues 195-227 form a disordered region; it reads AGAQTPTSPLAKSSPDRSRTVSPTASIRSSMLR. The span at 214–226 shows a compositional bias: polar residues; it reads TVSPTASIRSSML. Position 216 is a phosphoserine (serine 216). One can recognise a CAP-Gly 2 domain in the interval 260–302; it reads GETQFAPGNWCGVELDEPSGKNDGTVDDIRYFECKPKYGVFVP. Phosphoserine occurs at positions 309, 322, and 325. Phosphothreonine is present on threonine 327. The residue at position 328 (serine 328) is a Phosphoserine. Threonine 362 is subject to Phosphothreonine. Coiled-coil stretches lie at residues 378–468, 484–660, 667–916, 926–981, 1001–1121, 1158–1549, and 1565–1600; these read QHVE…VSAT, GALQ…DMLR, EEKS…TKLK, LSSC…ELQA, ATGH…EAIQ, EADM…AQMN, and DIET…LETL. Residues 843-905 are disordered; the sequence is QQAAASGEEG…GSLEEEAKKS (63 aa). Polar residues predominate over residues 865–885; sequence QLKSQAEETQSELKSTQSNLE. Disordered regions lie at residues 1031–1052 and 1400–1419; these read QLQD…KEKS and KLDE…NEIQ. 2 stretches are compositionally biased toward basic and acidic residues: residues 1040 to 1052 and 1410 to 1419; these read TKLK…KEKS and SQKKSHNEIQ. A disordered region spans residues 1635 to 1665; the sequence is TEDCPIQGSEDQDYSTPSSESNNNEKERKLP. Residue threonine 1681 is modified to Phosphothreonine. Serine 1682 carries the post-translational modification Phosphoserine.

As to quaternary structure, interacts with Lva. In terms of tissue distribution, specifically expressed at the tip of the furrow in cellularizing blastoderms. CLIP-190 and jar are coexpressed at several times in development and in a number of tissues, including embryonic axonal neuron processes and posterior pole.

It is found in the cytoplasm. The protein localises to the cytoskeleton. The protein resides in the golgi apparatus. Its subcellular location is the microtubule organizing center. It localises to the perinuclear region. Together CLIP-190 and jar may coordinate the interaction between the actin and microtubule cytoskeleton. May link endocytic vesicles to microtubules. May play a role in formation of furrows during cellularization. The polypeptide is Restin homolog (CLIP-190) (Drosophila melanogaster (Fruit fly)).